Here is a 173-residue protein sequence, read N- to C-terminus: MQLNKVLKGLMIALPVMAIAACSSNKNASNDGSEGMLGAGTGMDANGGNGNMSSEEQARLQMQQLQQNNIVYFDLDKYDIRSDFAQMLDAHANFLRSNPSYKVTVEGHADERGTPEYNISLGERRANAVKMYLQGKGVSADQISIVSYGKEKPAVLGHDEAAYSKNRRAVLVY.

An N-terminal signal peptide occupies residues 1–21; that stretch reads MQLNKVLKGLMIALPVMAIAA. Residue C22 is the site of N-palmitoyl cysteine attachment. C22 is lipidated: S-diacylglycerol cysteine. Residues 30 to 58 form a disordered region; the sequence is NDGSEGMLGAGTGMDANGGNGNMSSEEQA. Residues 35–50 are compositionally biased toward gly residues; sequence GMLGAGTGMDANGGNG. Residues 60–173 form the OmpA-like domain; sequence LQMQQLQQNN…SKNRRAVLVY (114 aa).

The protein belongs to the Pal lipoprotein family. In terms of assembly, the Tol-Pal system is composed of five core proteins: the inner membrane proteins TolA, TolQ and TolR, the periplasmic protein TolB and the outer membrane protein Pal. They form a network linking the inner and outer membranes and the peptidoglycan layer.

It localises to the cell outer membrane. Part of the Tol-Pal system, which plays a role in outer membrane invagination during cell division and is important for maintaining outer membrane integrity. The chain is Peptidoglycan-associated lipoprotein from Escherichia coli O157:H7.